We begin with the raw amino-acid sequence, 371 residues long: MPEITHRKNTRPVKVGDLTIGGSNELVIQSMTTTKTHDVEATVAEIKRLEEAGCQIVRVACPKEEDALAIAEIKKQINIPLVVDIHFDYKLALLAIEGGADKIRINPGNIGRREKVEEVVKACKAKGIPIRIGVNAGSLEKHILKKYGYPTADGMVESALHHIKILEDLDFHDIIVSMKASDVNLAIEAYTKAAQAFDYPLHLGITESGTLFAGTVKSAAGLGAIMSLGIGNTLRISLSADPVEEVKVARELLKSFGLASNAATLISCPTCGRIEIDLISIANEVEEYISTIKAPLKVAVLGCAVNGPGEAREADIGIAGARGEGLLFMKGKTVRKVPEETMVEELKMEIDKLAEEYFKKQEAEKLANAEK.

Residues C268, C271, C303, and E310 each contribute to the [4Fe-4S] cluster site.

This sequence belongs to the IspG family. [4Fe-4S] cluster serves as cofactor.

The catalysed reaction is (2E)-4-hydroxy-3-methylbut-2-enyl diphosphate + oxidized [flavodoxin] + H2O + 2 H(+) = 2-C-methyl-D-erythritol 2,4-cyclic diphosphate + reduced [flavodoxin]. It functions in the pathway isoprenoid biosynthesis; isopentenyl diphosphate biosynthesis via DXP pathway; isopentenyl diphosphate from 1-deoxy-D-xylulose 5-phosphate: step 5/6. Converts 2C-methyl-D-erythritol 2,4-cyclodiphosphate (ME-2,4cPP) into 1-hydroxy-2-methyl-2-(E)-butenyl 4-diphosphate. The chain is 4-hydroxy-3-methylbut-2-en-1-yl diphosphate synthase (flavodoxin) from Macrococcus caseolyticus (strain JCSC5402) (Macrococcoides caseolyticum).